Reading from the N-terminus, the 454-residue chain is tRNA modification GTPase MnmE (454 aa).

(6S)-5-formyl-5,6,7,8-tetrahydrofolate is bound by residues arginine 23, glutamate 80, and lysine 120. The region spanning 216 to 377 is the TrmE-type G domain; it reads GMKVVIAGRP…LRNHLKQSMG (162 aa). K(+) is bound at residue asparagine 226. GTP is bound by residues 226 to 231, 245 to 251, 270 to 273, 335 to 338, and 358 to 360; these read NAGKSS, TDIAGTT, DTAG, NKAD, and SAR. Serine 230 provides a ligand contact to Mg(2+). The K(+) site is built by threonine 245, isoleucine 247, and threonine 250. Threonine 251 lines the Mg(2+) pocket. Lysine 454 provides a ligand contact to (6S)-5-formyl-5,6,7,8-tetrahydrofolate.

This sequence belongs to the TRAFAC class TrmE-Era-EngA-EngB-Septin-like GTPase superfamily. TrmE GTPase family. In terms of assembly, homodimer. Heterotetramer of two MnmE and two MnmG subunits. Requires K(+) as cofactor.

Its subcellular location is the cytoplasm. Its function is as follows. Exhibits a very high intrinsic GTPase hydrolysis rate. Involved in the addition of a carboxymethylaminomethyl (cmnm) group at the wobble position (U34) of certain tRNAs, forming tRNA-cmnm(5)s(2)U34. The protein is tRNA modification GTPase MnmE of Shigella sonnei (strain Ss046).